The primary structure comprises 202 residues: GTP cyclohydrolase-2 (202 aa).

49–53 (RIHSE) provides a ligand contact to GTP. The Zn(2+) site is built by Cys54, Cys65, and Cys67. GTP is bound by residues Gln70, 92–94 (EGR), and Thr114. The active-site Proton acceptor is Asp126. The Nucleophile role is filled by Arg128. Residues Thr149 and Lys154 each coordinate GTP.

This sequence belongs to the GTP cyclohydrolase II family. The cofactor is Zn(2+).

The enzyme catalyses GTP + 4 H2O = 2,5-diamino-6-hydroxy-4-(5-phosphoribosylamino)-pyrimidine + formate + 2 phosphate + 3 H(+). The protein operates within cofactor biosynthesis; riboflavin biosynthesis; 5-amino-6-(D-ribitylamino)uracil from GTP: step 1/4. In terms of biological role, catalyzes the conversion of GTP to 2,5-diamino-6-ribosylamino-4(3H)-pyrimidinone 5'-phosphate (DARP), formate and pyrophosphate. This Shewanella frigidimarina (strain NCIMB 400) protein is GTP cyclohydrolase-2.